The following is a 488-amino-acid chain: Protein nucleotidyltransferase YdiU (488 aa).

ATP-binding residues include Gly91, Gly93, Arg94, Lys114, Asp126, Gly127, Arg177, and Arg184. The active-site Proton acceptor is Asp253. 2 residues coordinate Mg(2+): Asn254 and Asp263. ATP is bound at residue Asp263.

The protein belongs to the SELO family. The cofactor is Mg(2+). Requires Mn(2+) as cofactor.

The catalysed reaction is L-seryl-[protein] + ATP = 3-O-(5'-adenylyl)-L-seryl-[protein] + diphosphate. The enzyme catalyses L-threonyl-[protein] + ATP = 3-O-(5'-adenylyl)-L-threonyl-[protein] + diphosphate. It catalyses the reaction L-tyrosyl-[protein] + ATP = O-(5'-adenylyl)-L-tyrosyl-[protein] + diphosphate. It carries out the reaction L-histidyl-[protein] + UTP = N(tele)-(5'-uridylyl)-L-histidyl-[protein] + diphosphate. The catalysed reaction is L-seryl-[protein] + UTP = O-(5'-uridylyl)-L-seryl-[protein] + diphosphate. The enzyme catalyses L-tyrosyl-[protein] + UTP = O-(5'-uridylyl)-L-tyrosyl-[protein] + diphosphate. Its function is as follows. Nucleotidyltransferase involved in the post-translational modification of proteins. It can catalyze the addition of adenosine monophosphate (AMP) or uridine monophosphate (UMP) to a protein, resulting in modifications known as AMPylation and UMPylation. The chain is Protein nucleotidyltransferase YdiU from Bacillus cereus (strain G9842).